Here is a 572-residue protein sequence, read N- to C-terminus: Probable cysteine--tRNA ligase, mitochondrial (572 aa).

A Zn(2+)-binding site is contributed by Cys-81. Position 82 (Gly-82) interacts with L-cysteine. A 'HIGH' region motif is present at residues 83-93 (PTVYDHAHLGH). Thr-122 is a binding site for L-cysteine. The 'KIIK' region signature appears at 127-130 (KIIK). Residues Cys-260, His-285, and Glu-289 each contribute to the Zn(2+) site. His-285 is an L-cysteine binding site. The short motif at 320 to 324 (KMSKS) is the 'KMSKS' region element. ATP is bound at residue Lys-323.

This sequence belongs to the class-I aminoacyl-tRNA synthetase family. Zn(2+) serves as cofactor.

It localises to the mitochondrion. The enzyme catalyses tRNA(Cys) + L-cysteine + ATP = L-cysteinyl-tRNA(Cys) + AMP + diphosphate. It carries out the reaction 2 L-cysteine = S-sulfanyl-L-cysteine + L-alanine. It catalyses the reaction S-sulfanyl-L-cysteine + L-cysteine = S-disulfanyl-L-cysteine + L-alanine. The catalysed reaction is S-sulfanyl-L-cysteine + tRNA(Cys) + ATP = (S)-sulfanyl-L-cysteinyl-tRNA(Cys) + AMP + diphosphate. The enzyme catalyses S-disulfanyl-L-cysteine + tRNA(Cys) + ATP = (S)-disulfanyl-L-cysteinyl-tRNA(Cys) + AMP + diphosphate. Mitochondrial cysteine-specific aminoacyl-tRNA synthetase that catalyzes the ATP-dependent ligation of cysteine to tRNA(Cys). Functionally, in addition to its role as an aminoacyl-tRNA synthetase, has also cysteine persulfide synthase activity. Produces reactive persulfide species such as cysteine persulfide (CysSSH) from substrate cysteine and mediate direct incorporation of CysSSH into proteins during translations, resulting in protein persulfides and polysulfides. CysSSHs behave as potent antioxidants and cellular protectants. The protein is Probable cysteine--tRNA ligase, mitochondrial (cars2) of Xenopus tropicalis (Western clawed frog).